The sequence spans 82 residues: Small ribosomal subunit protein bS16 (82 aa).

The protein belongs to the bacterial ribosomal protein bS16 family.

The sequence is that of Small ribosomal subunit protein bS16 from Photorhabdus laumondii subsp. laumondii (strain DSM 15139 / CIP 105565 / TT01) (Photorhabdus luminescens subsp. laumondii).